An 831-amino-acid polypeptide reads, in one-letter code: DNA polymerase I, thermostable (831 aa).

The region spanning 174–258 (RPEQWVDYRA…TDLPLEVDFG (85 aa)) is the 5'-3' exonuclease domain. Residues 409–831 (ERLFQTLKER…LGEDWLSAKE (423 aa)) form a polymerase region.

The protein belongs to the DNA polymerase type-A family.

It carries out the reaction DNA(n) + a 2'-deoxyribonucleoside 5'-triphosphate = DNA(n+1) + diphosphate. Functionally, in addition to polymerase activity, this DNA polymerase exhibits 5'-3' exonuclease activity. This is DNA polymerase I, thermostable (polA) from Thermus thermophilus.